A 382-amino-acid polypeptide reads, in one-letter code: V-type proton ATPase subunit C 1 (382 aa).

At Thr2 the chain carries N-acetylthreonine.

Belongs to the V-ATPase C subunit family. As to quaternary structure, V-ATPase is a heteromultimeric enzyme made up of two complexes: the ATP-hydrolytic V1 complex and the proton translocation V0 complex. The V1 complex consists of three catalytic AB heterodimers that form a heterohexamer, three peripheral stalks each consisting of EG heterodimers, one central rotor including subunits D and F, and the regulatory subunits C and H. The proton translocation complex V0 consists of the proton transport subunit a, a ring of proteolipid subunits c9c'', rotary subunit d, subunits e and f, and the accessory subunits ATP6AP1/Ac45 and ATP6AP2/PRR.

It localises to the cytoplasmic vesicle. The protein localises to the secretory vesicle. It is found in the synaptic vesicle membrane. Its subcellular location is the clathrin-coated vesicle membrane. Subunit of the V1 complex of vacuolar(H+)-ATPase (V-ATPase), a multisubunit enzyme composed of a peripheral complex (V1) that hydrolyzes ATP and a membrane integral complex (V0) that translocates protons. V-ATPase is responsible for acidifying and maintaining the pH of intracellular compartments and in some cell types, is targeted to the plasma membrane, where it is responsible for acidifying the extracellular environment. Subunit C is necessary for the assembly of the catalytic sector of the enzyme and is likely to have a specific function in its catalytic activity. The chain is V-type proton ATPase subunit C 1 (ATP6V1C1) from Macaca fascicularis (Crab-eating macaque).